We begin with the raw amino-acid sequence, 143 residues long: Polyadenylate-binding protein-interacting protein 2 (143 aa).

The short motif at 11–21 (TLNPNAPVFDP) is the PAM2-like element.

This Arabidopsis thaliana (Mouse-ear cress) protein is Polyadenylate-binding protein-interacting protein 2 (CID2).